A 381-amino-acid polypeptide reads, in one-letter code: E3 ubiquitin-protein ligase KCMF1 (381 aa).

Position 2 is an N-acetylserine (serine 2). Serine 2 is subject to Phosphoserine. Residues 4–60 (HEGVSCDACLKGNFRGRRYKCLICYDYDLCASCYESGATTTRHTTDHPMQCILTRVD) form a ZZ-type zinc finger. Residues cysteine 9, cysteine 12, cysteine 24, cysteine 27, cysteine 33, cysteine 36, histidine 46, and histidine 50 each coordinate Zn(2+). The C2H2-type zinc-finger motif lies at 78-101 (FTCPYCGKMGYTETSLQEHVTSEH). A disordered region spans residues 154 to 193 (MFHPGRGLGGPRARRSNMHFTSSSTGGLSSSQSSYSPSNR). A phosphoserine mark is found at serine 169, serine 189, and serine 212. A compositionally biased stretch (low complexity) spans 175-191 (SSSTGGLSSSQSSYSPS). Residues 225–257 (SQLQQLQMQLQLERQHAQAARQQLETARNATRR) adopt a coiled-coil conformation. Residues 294–314 (TRLNDPKMSETERQSMESERA) form a disordered region. Over residues 297 to 314 (NDPKMSETERQSMESERA) the composition is skewed to basic and acidic residues. A phosphoserine mark is found at serine 335 and serine 336.

This sequence belongs to the KCMF1 family. In terms of assembly, component of the SIFI complex, composed of KCMF1, UBR4 and calmodulin (CALM1, CALM2 or CALM3). As to expression, spleen, small intestine, ovary, peripheral blood, lung, kidney and pancreas. Expressed at low levels in the thymus, prostate, testis, colon, heart, brain, placenta and liver.

The protein localises to the cytoplasm. It is found in the late endosome. It localises to the lysosome. The catalysed reaction is S-ubiquitinyl-[E2 ubiquitin-conjugating enzyme]-L-cysteine + [acceptor protein]-L-lysine = [E2 ubiquitin-conjugating enzyme]-L-cysteine + N(6)-ubiquitinyl-[acceptor protein]-L-lysine.. The protein operates within protein modification; protein ubiquitination. Its function is as follows. E3 ubiquitin-protein ligase which accepts ubiquitin from an E2 ubiquitin-conjugating enzyme and then transfers it to targeted substrates, promoting their degradation by the proteasome. Together with UBR4, component of the N-end rule pathway: ubiquitinates proteins bearing specific N-terminal residues that are destabilizing according to the N-end rule, leading to their degradation. Does not ubiquitinate proteins that are acetylated at the N-terminus. Together with UBR4, part of a protein quality control pathway that catalyzes ubiquitination and degradation of proteins that have been oxidized in response to reactive oxygen species (ROS): recognizes proteins with an Arg-CysO3(H) degron at the N-terminus, and mediates assembly of heterotypic 'Lys-63'-/'Lys-27'-linked branched ubiquitin chains on oxidized proteins, leading to their degradation by autophagy. Catalytic component of the SIFI complex, a multiprotein complex required to inhibit the mitochondrial stress response after a specific stress event has been resolved: ubiquitinates and degrades (1) components of the HRI-mediated signaling of the integrated stress response, such as DELE1 and EIF2AK1/HRI, as well as (2) unimported mitochondrial precursors. Within the SIFI complex, UBR4 initiates ubiquitin chain that are further elongated or branched by KCMF1. The chain is E3 ubiquitin-protein ligase KCMF1 from Homo sapiens (Human).